The primary structure comprises 322 residues: ATP-dependent 6-phosphofructokinase (322 aa).

Residues Gly-12, 73-74 (RF), and 103-106 (GDGT) contribute to the ATP site. Asp-104 is a Mg(2+) binding site. Position 126–128 (126–128 (TID)) interacts with substrate. Residue Asp-128 is the Proton acceptor of the active site. Arg-155 contributes to the ADP binding site. Substrate is bound by residues Arg-163 and 170–172 (MGR). ADP is bound by residues 186–188 (GSE), Lys-212, and 214–216 (KPS). Substrate is bound by residues Glu-223, Arg-245, and 251-254 (HTQR).

The protein belongs to the phosphofructokinase type A (PFKA) family. ATP-dependent PFK group I subfamily. Prokaryotic clade 'B1' sub-subfamily. Homotetramer. Mg(2+) serves as cofactor.

The protein resides in the cytoplasm. It carries out the reaction beta-D-fructose 6-phosphate + ATP = beta-D-fructose 1,6-bisphosphate + ADP + H(+). It participates in carbohydrate degradation; glycolysis; D-glyceraldehyde 3-phosphate and glycerone phosphate from D-glucose: step 3/4. With respect to regulation, allosterically activated by ADP and other diphosphonucleosides, and allosterically inhibited by phosphoenolpyruvate. Catalyzes the phosphorylation of D-fructose 6-phosphate to fructose 1,6-bisphosphate by ATP, the first committing step of glycolysis. This Mesomycoplasma hyopneumoniae (strain 232) (Mycoplasma hyopneumoniae) protein is ATP-dependent 6-phosphofructokinase.